The sequence spans 128 residues: B2 protein (128 aa).

An N-terminal signal peptide occupies residues 1-10 (SLILLVAVQA). Cystine bridges form between Cys26–Cys57 and Cys97–Cys114.

Belongs to the PBP/GOBP family. In terms of processing, N-glycosylated. As to expression, tubular accessory sex gland.

Its subcellular location is the secreted. Functionally, may be a carrier protein for lipids. This Tenebrio molitor (Yellow mealworm beetle) protein is B2 protein.